Consider the following 498-residue polypeptide: Cytochrome P450 71D15 (498 aa).

A helical; Signal-anchor for type II membrane protein membrane pass occupies residues 3–23 (LLQLWSALIILVVTYTISLLI). A heme-binding site is contributed by Cys437.

This sequence belongs to the cytochrome P450 family. Heme serves as cofactor.

Its subcellular location is the endoplasmic reticulum membrane. The catalysed reaction is (4S)-limonene + reduced [NADPH--hemoprotein reductase] + O2 = (1S,6R)-isopiperitenol + oxidized [NADPH--hemoprotein reductase] + H2O + H(+). Its function is as follows. Hydroxylates (-)-(4S)-limonene to (-)-trans-isopiperitenol, a precursor of (-)-menthol, responsible for the cooling sensation of peppermint. Fluorinated substrate analogs are hydroxylated with the same regio- and stereochemistry. This is Cytochrome P450 71D15 (CYP71D15) from Mentha piperita (Peppermint).